The primary structure comprises 267 residues: Tryptophan synthase alpha chain (267 aa).

Active-site proton acceptor residues include Glu-39 and Asp-50.

Belongs to the TrpA family. As to quaternary structure, tetramer of two alpha and two beta chains.

It carries out the reaction (1S,2R)-1-C-(indol-3-yl)glycerol 3-phosphate + L-serine = D-glyceraldehyde 3-phosphate + L-tryptophan + H2O. It participates in amino-acid biosynthesis; L-tryptophan biosynthesis; L-tryptophan from chorismate: step 5/5. The alpha subunit is responsible for the aldol cleavage of indoleglycerol phosphate to indole and glyceraldehyde 3-phosphate. The protein is Tryptophan synthase alpha chain of Helicobacter hepaticus (strain ATCC 51449 / 3B1).